Here is a 207-residue protein sequence, read N- to C-terminus: Reticulon-1-A (207 aa).

Residues 21–207 (AIDLLYWRDI…AKIPGTKQKE (187 aa)) enclose the Reticulon domain. 2 helical membrane-spanning segments follow: residues 35–55 (IVFGSVLLMLFSLIQFSVVSV) and 139–159 (VLMWLLTYVGALFNGLTLLIM).

In terms of tissue distribution, expressed in the animal hemisphere (presumptive neural ectoderm) of blastula and gastrula stage embryos, and along the anterior neural border, in the panplacodal primordium, and in the dorsolateral side of archenteron roof of late neurula embryos. At the tailbud stage, expression localizes to the central nervous system, including the spinal cord, prosencephalon, mesencephalon and rhombencephalon, as well as the lateral line placode, otic vesicle and pronephros.

It is found in the endoplasmic reticulum membrane. Its subcellular location is the nucleus. In terms of biological role, inhibits amyloid precursor protein processing, probably by blocking BACE1 activity. The polypeptide is Reticulon-1-A (rtn1-a) (Xenopus laevis (African clawed frog)).